Consider the following 365-residue polypeptide: MMNVIEGILNTTLGVVFTWVGWKTYKILWKYTPYSYPNARVRAMEAKLLTEQRFNELAESRTLQNFVASLEDTDYKETLSNVSSYSVEEIERALDASLAKTYELMFKILPKRSRDFFRLMMEEWDVRNIANVVKAKLANEPASDYIIELGPMLPKVKAMAEAKTLEEILVILEGTPYEGPYQELIAGNIDVSTFETELYRMYYKKLLNYARSRKDDEKTLLTEFIKLKIDKLNLMTTLRGKLAGLSAKEIRSMLIPGGSLDVEPLLHIDSIEMTLAQLDSTEYGEFIRKVREEAEKDISVIERAFDEHLIKKVTEFDRFHPLSIAAPLAYVLKKEREVRKLRAMVKLIGDGLEPEVIKEFVGEVA.

It belongs to the V-ATPase V0D/AC39 subunit family. In terms of assembly, has multiple subunits with at least A(3), B(3), C, D, E, F, H, I and proteolipid K(x).

Its subcellular location is the cell membrane. Functionally, component of the A-type ATP synthase that produces ATP from ADP in the presence of a proton gradient across the membrane. The chain is A-type ATP synthase subunit C from Thermococcus kodakarensis (strain ATCC BAA-918 / JCM 12380 / KOD1) (Pyrococcus kodakaraensis (strain KOD1)).